Here is a 387-residue protein sequence, read N- to C-terminus: Deoxyguanosinetriphosphate triphosphohydrolase-like protein (387 aa).

One can recognise an HD domain in the interval 78–209 (RLTHSLEVAQ…ANLADEVAYN (132 aa)).

The protein belongs to the dGTPase family. Type 2 subfamily.

The polypeptide is Deoxyguanosinetriphosphate triphosphohydrolase-like protein (Ralstonia nicotianae (strain ATCC BAA-1114 / GMI1000) (Ralstonia solanacearum)).